The primary structure comprises 345 residues: N-glycosylase/DNA lyase (345 aa).

DNA is bound by residues asparagine 149, arginine 154, and arginine 204. Catalysis depends on lysine 249, which acts as the Schiff-base intermediate with DNA. Positions 266 and 268 each coordinate 8-oxoguanine. Positions 270 and 287 each coordinate DNA. The 8-oxoguanine site is built by glutamine 315 and phenylalanine 319.

The protein belongs to the type-1 OGG1 family. As to expression, highest expression in testis.

It localises to the nucleus. The protein resides in the nucleoplasm. Its subcellular location is the nucleus speckle. The protein localises to the nucleus matrix. It carries out the reaction 2'-deoxyribonucleotide-(2'-deoxyribose 5'-phosphate)-2'-deoxyribonucleotide-DNA = a 3'-end 2'-deoxyribonucleotide-(2,3-dehydro-2,3-deoxyribose 5'-phosphate)-DNA + a 5'-end 5'-phospho-2'-deoxyribonucleoside-DNA + H(+). Functionally, DNA repair enzyme that incises DNA at 8-oxoG residues. Excises 7,8-dihydro-8-oxoguanine and 2,6-diamino-4-hydroxy-5-N-methylformamidopyrimidine (FAPY) from damaged DNA. Has a beta-lyase activity that nicks DNA 3' to the lesion. This is N-glycosylase/DNA lyase (Ogg1) from Mus musculus (Mouse).